The sequence spans 365 residues: Methylthioribose-1-phosphate isomerase (365 aa).

Residues 53–55, R90, and Q201 contribute to the substrate site; that span reads RGA. Catalysis depends on D242, which acts as the Proton donor. 252–253 is a substrate binding site; that stretch reads NK.

This sequence belongs to the eIF-2B alpha/beta/delta subunits family. MtnA subfamily.

It carries out the reaction 5-(methylsulfanyl)-alpha-D-ribose 1-phosphate = 5-(methylsulfanyl)-D-ribulose 1-phosphate. The protein operates within amino-acid biosynthesis; L-methionine biosynthesis via salvage pathway; L-methionine from S-methyl-5-thio-alpha-D-ribose 1-phosphate: step 1/6. Catalyzes the interconversion of methylthioribose-1-phosphate (MTR-1-P) into methylthioribulose-1-phosphate (MTRu-1-P). This is Methylthioribose-1-phosphate isomerase from Methylorubrum extorquens (strain CM4 / NCIMB 13688) (Methylobacterium extorquens).